Reading from the N-terminus, the 414-residue chain is Carboxynorspermidine synthase (414 aa).

Belongs to the saccharopine dehydrogenase family. Carboxynorspermidine synthase subfamily.

The catalysed reaction is carboxynorspermidine + NADP(+) + H2O = L-aspartate 4-semialdehyde + propane-1,3-diamine + NADPH + H(+). The enzyme catalyses carboxyspermidine + NADP(+) + H2O = L-aspartate 4-semialdehyde + putrescine + NADPH + H(+). Functionally, involved in norspermidine biosynthesis. Catalyzes the synthesis of carboxynorspermidine from L-aspartate 4-semialdehyde and 1,3-diaminopropane. Is also active with putrescine as a substrate. Essential for biofilm formation. The polypeptide is Carboxynorspermidine synthase (Vibrio cholerae serotype O1 (strain ATCC 39315 / El Tor Inaba N16961)).